The following is a 799-amino-acid chain: Protein ADP-ribosyltransferase PARP3 (799 aa).

A compositionally biased stretch (basic and acidic residues) spans 1–49 (MKVESRSHNVHHAHGEEEKVMTRKQKAESKAHEVEHSPKKAKVEDEKNG). The tract at residues 1-55 (MKVESRSHNVHHAHGEEEKVMTRKQKAESKAHEVEHSPKKAKVEDEKNGHTNGKS) is disordered. The region spanning 39–188 (KKAKVEDEKN…QRDLGLAIKP (150 aa)) is the PADR1 zinc-binding domain. The 35-residue stretch at 71–105 (NEQLSLEQMKEILEANDLDSSGSDLEITRRCQDLL) folds into the SAP domain. The zinc ribbon stretch occupies residues 108 to 152 (GALEKCMVCNGNMEFDGRRYGCRGFYSEWSSCTFSTREPPRKDEP). Zn(2+)-binding residues include cysteine 113, cysteine 116, cysteine 129, and cysteine 139. The interval 140-161 (TFSTREPPRKDEPIKLPDSVQN) is disordered. Residues 145–154 (EPPRKDEPIK) are compositionally biased toward basic and acidic residues. Residues 189–261 (FTGMMISLMG…EPQPLESYDL (73 aa)) form the BRCT domain. The WGR domain occupies 309 to 409 (DGKIFEKDGI…KKFQKKPLKF (101 aa)). One can recognise a PARP alpha-helical domain in the interval 436–555 (HCKLEPMVAN…DITLASHLIG (120 aa)). The PARP catalytic domain maps to 564-795 (DPLSDTYKKL…VKYEEKDAVI (232 aa)).

Belongs to the ARTD/PARP family.

It is found in the nucleus. It carries out the reaction L-aspartyl-[protein] + NAD(+) = 4-O-(ADP-D-ribosyl)-L-aspartyl-[protein] + nicotinamide. The catalysed reaction is L-glutamyl-[protein] + NAD(+) = 5-O-(ADP-D-ribosyl)-L-glutamyl-[protein] + nicotinamide. Involved in the base excision repair (BER) pathway, by catalyzing the poly(ADP-ribosyl)ation of a limited number of acceptor proteins involved in chromatin architecture and in DNA metabolism. This modification follows DNA damages and appears as an obligatory step in a detection/signaling pathway leading to the reparation of DNA strand breaks. This Medicago truncatula (Barrel medic) protein is Protein ADP-ribosyltransferase PARP3 (PARP3).